We begin with the raw amino-acid sequence, 361 residues long: MEKKILEYLKRLEEVEVKISNPEIFENPKEYSSLSKEHARLSELKNVYDKVLGQEKILNDDKEALAQEKDPEMIAMLEEGIQLGKAEVDKLYKVLENLLVPPDPDDDLNVIMELRAGTGGDEAALFVGDCVRMYHLYASTKGWKYEVLSASESDIGGYKEYVMGISGAAVKRLLQYEAGTHRVQRVPETETQGRVHTSAITVAVLPEPAEDDEEVFIDEKDLKIDTFRASGAGGQHVNVTDSAVRITHLPTGVVVTCQDERSQHKNKAKAMRILKARIRDAEMQRRQKEASAMRSAQVGSGDRSERIRTYNFSQNRVTDHRIGLTLYNLDKVMEGDLDAITSALVSHAYHQLLQHGNEENS.

Gln-235 is subject to N5-methylglutamine. Residues 287-309 (QKEASAMRSAQVGSGDRSERIRT) form a disordered region.

The protein belongs to the prokaryotic/mitochondrial release factor family. Post-translationally, methylated by PrmC. Methylation increases the termination efficiency of RF1.

The protein localises to the cytoplasm. Functionally, peptide chain release factor 1 directs the termination of translation in response to the peptide chain termination codons UAG and UAA. This is Peptide chain release factor 1 from Chlamydia caviae (strain ATCC VR-813 / DSM 19441 / 03DC25 / GPIC) (Chlamydophila caviae).